Reading from the N-terminus, the 432-residue chain is Cyclic 2,3-diphosphoglycerate synthetase (432 aa).

It belongs to the cyclic 2,3-diphosphoglycerate synthetase family.

It localises to the cytoplasm. It catalyses the reaction (2R)-2,3-bisphosphoglycerate + ATP + H(+) = cyclic (2R)-2,3-bisphosphoglycerate + ADP + phosphate. Catalyzes the formation of cyclic 2,3-diphosphoglycerate (cDPG) by formation of an intramolecular phosphoanhydride bond at the expense of ATP. The polypeptide is Cyclic 2,3-diphosphoglycerate synthetase (Thermococcus onnurineus (strain NA1)).